The following is a 122-amino-acid chain: Protein MGF 110-6L (122 aa).

The signal sequence occupies residues 1 to 18; sequence MLVIFLGILGLMASQVLG. An N-linked (GlcNAc...) asparagine; by host glycan is attached at Asn-100. Positions 119 to 122 match the Prevents secretion from ER motif; it reads KDEL.

The protein belongs to the asfivirus MGF 110 family. Post-translationally, N-glycosylated.

The protein localises to the host endoplasmic reticulum lumen. Functionally, plays a role in virus cell tropism, and may be required for efficient virus replication in macrophages. The polypeptide is Protein MGF 110-6L (Ornithodoros (relapsing fever ticks)).